Here is a 692-residue protein sequence, read N- to C-terminus: Putative ESX-1 scaffolding and assembly protein SaeA (692 aa).

Over residues 1 to 21 the composition is skewed to basic and acidic residues; that stretch reads MGERGELVSDLHPSDDHDADP. Disordered stretches follow at residues 1 to 23 and 87 to 134; these read MGER…DPRL and PAAP…TTGF. A compositionally biased stretch (pro residues) spans 89-107; the sequence is APEPDPPPVPEPQPEPEPG.

The protein localises to the cytoplasm. Its function is as follows. May be involved in assembly of the ESX-1 / type VII specialized secretion system (T7SS), which exports several proteins including EsxA and EsxB. Involved in DNA conjugation in recipient (MKD8) but not donor (mc(2)155) strain. In Mycolicibacterium smegmatis (strain ATCC 700084 / mc(2)155) (Mycobacterium smegmatis), this protein is Putative ESX-1 scaffolding and assembly protein SaeA.